The chain runs to 380 residues: Succinyl-diaminopimelate desuccinylase (380 aa).

His69 serves as a coordination point for Zn(2+). Asp71 is a catalytic residue. Residue Asp102 participates in Zn(2+) binding. Glu135 serves as the catalytic Proton acceptor. Zn(2+) contacts are provided by Glu136, Glu164, and His353.

The protein belongs to the peptidase M20A family. DapE subfamily. As to quaternary structure, homodimer. Zn(2+) serves as cofactor. It depends on Co(2+) as a cofactor.

The catalysed reaction is N-succinyl-(2S,6S)-2,6-diaminopimelate + H2O = (2S,6S)-2,6-diaminopimelate + succinate. It participates in amino-acid biosynthesis; L-lysine biosynthesis via DAP pathway; LL-2,6-diaminopimelate from (S)-tetrahydrodipicolinate (succinylase route): step 3/3. Functionally, catalyzes the hydrolysis of N-succinyl-L,L-diaminopimelic acid (SDAP), forming succinate and LL-2,6-diaminopimelate (DAP), an intermediate involved in the bacterial biosynthesis of lysine and meso-diaminopimelic acid, an essential component of bacterial cell walls. In Cereibacter sphaeroides (strain ATCC 17025 / ATH 2.4.3) (Rhodobacter sphaeroides), this protein is Succinyl-diaminopimelate desuccinylase.